The primary structure comprises 452 residues: MLSFLQKLGKSFMLPIAVLPAVGIILALGREDVFNIPFVYQAGTAVFDHLPLIFAIGIAIGISKDSNGAAGLSGAISYLMLDAATKTIDKTNNMAVFGGIIAGLIAGYTYNRFKDTKLPEYLGFFSGRRLVPILTAIITIILAGIFGVVWPPIQSCINSFGEWMLGLGGIGAGIFGLFNRLLIPLGLHHVLNNIFWFQFGEYNGVTGDLARFFAKDPTAGTYMTGFFPIMMFGLPAACLAMVVTAKPSKRKATAGMMIGFALTAFITGITEPIEFAFMFLSPLLYAVHAVLTGLSLFIVNWLGIRSGFSFSAGAIDYVLSYGIAEKPLLLLLVGICYAAVYFIVFYVLIKALNLKTPGREDDDVDEVLDENTVQDVNENIMLKGLGGKENLQTIDHCATRLRLTVKDTALVDEALLKKAGAKGVVKSGGQSVQVIIGPNVEFAAEELRAAVK.

Residues 1 to 361 (MLSFLQKLGK…LNLKTPGRED (361 aa)) enclose the PTS EIIC type-1 domain. 9 consecutive transmembrane segments (helical) span residues 8–28 (LGKS…ILAL), 42–62 (AGTA…AIGI), 91–111 (TNNM…YTYN), 130–150 (LVPI…GVVW), 163–183 (WMLG…RLLI), 223–243 (MTGF…AMVV), 257–277 (MIGF…EFAF), 279–299 (FLSP…LFIV), and 329–349 (LLLL…YVLI). The region spanning 375–452 (DVNENIMLKG…AAEELRAAVK (78 aa)) is the PTS EIIB type-1 domain. Cysteine 397 serves as the catalytic Phosphocysteine intermediate; for EIIB activity.

As to quaternary structure, interacts with FloT.

Its subcellular location is the cell membrane. The protein localises to the membrane raft. It carries out the reaction N(pros)-phospho-L-histidyl-[protein] + N-acetyl-D-glucosamine(out) = N-acetyl-D-glucosamine 6-phosphate(in) + L-histidyl-[protein]. Its function is as follows. The phosphoenolpyruvate-dependent sugar phosphotransferase system (sugar PTS), a major carbohydrate active -transport system, catalyzes the phosphorylation of incoming sugar substrates concomitantly with their translocation across the cell membrane. This system is involved in N-acetylglucosamine transport. The chain is PTS system N-acetylglucosamine-specific EIICB component (nagP) from Bacillus subtilis (strain 168).